The primary structure comprises 280 residues: Phosphatidylglycerol--prolipoprotein diacylglyceryl transferase (280 aa).

Transmembrane regions (helical) follow at residues Ile-15–Leu-35, Phe-60–Phe-80, and Ile-90–Phe-110. An a 1,2-diacyl-sn-glycero-3-phospho-(1'-sn-glycerol)-binding site is contributed by Arg-138. A run of 2 helical transmembrane segments spans residues Met-217–Leu-237 and Gly-257–Val-277.

Belongs to the Lgt family.

It is found in the cell membrane. The enzyme catalyses L-cysteinyl-[prolipoprotein] + a 1,2-diacyl-sn-glycero-3-phospho-(1'-sn-glycerol) = an S-1,2-diacyl-sn-glyceryl-L-cysteinyl-[prolipoprotein] + sn-glycerol 1-phosphate + H(+). It functions in the pathway protein modification; lipoprotein biosynthesis (diacylglyceryl transfer). In terms of biological role, catalyzes the transfer of the diacylglyceryl group from phosphatidylglycerol to the sulfhydryl group of the N-terminal cysteine of a prolipoprotein, the first step in the formation of mature lipoproteins. This chain is Phosphatidylglycerol--prolipoprotein diacylglyceryl transferase, found in Buchnera aphidicola subsp. Baizongia pistaciae (strain Bp).